Consider the following 711-residue polypeptide: Polyribonucleotide nucleotidyltransferase (711 aa).

Aspartate 486 and aspartate 492 together coordinate Mg(2+). The KH domain occupies 553 to 612 (PRIHTIKINPDKIKDVIGKGGSVIRALTEETGTTIEIEDDGTVKIAATDGEKAKHAIRRI). The S1 motif domain occupies 622–690 (GRVYTGKVTR…RQGRIRLSIK (69 aa)). The disordered stretch occupies residues 689-711 (IKEATEQSQPAAAPEAPAAEQGE). Over residues 694-711 (EQSQPAAAPEAPAAEQGE) the composition is skewed to low complexity.

It belongs to the polyribonucleotide nucleotidyltransferase family. Component of the RNA degradosome, which is a multiprotein complex involved in RNA processing and mRNA degradation. The cofactor is Mg(2+).

It localises to the cytoplasm. It catalyses the reaction RNA(n+1) + phosphate = RNA(n) + a ribonucleoside 5'-diphosphate. Functionally, involved in mRNA degradation. Catalyzes the phosphorolysis of single-stranded polyribonucleotides processively in the 3'- to 5'-direction. The protein is Polyribonucleotide nucleotidyltransferase of Escherichia coli (strain ATCC 8739 / DSM 1576 / NBRC 3972 / NCIMB 8545 / WDCM 00012 / Crooks).